The sequence spans 278 residues: MNTFPAPAKLNLFLHVIGRRDDGYHLLQTVFRFIGYSDQLGFDVTNDGVIRHLNLVPGLTDTDDLCVRAAKLLQKRSGKEMLGVGIHLSKNIPLGGGLGGGSSDAATTLIVLNRLWGINWGRERLMALGLELGADVPIFIYGRNAFAEGVGEKLEVINLPPAWYVVLTPPAPISTAAVFASRELTRNTIPIKMAAFSMAQGHNDLELVAMRLQPVIAEWLDWLKGRHGSTKVAMSGSGSCVFAEFPSESAAREVLRQLPDSMSGFIAPGLARHPLSDF.

Residue Lys-9 is part of the active site. 93–103 (PLGGGLGGGSS) contacts ATP. Residue Asp-135 is part of the active site.

Belongs to the GHMP kinase family. IspE subfamily.

The enzyme catalyses 4-CDP-2-C-methyl-D-erythritol + ATP = 4-CDP-2-C-methyl-D-erythritol 2-phosphate + ADP + H(+). It participates in isoprenoid biosynthesis; isopentenyl diphosphate biosynthesis via DXP pathway; isopentenyl diphosphate from 1-deoxy-D-xylulose 5-phosphate: step 3/6. In terms of biological role, catalyzes the phosphorylation of the position 2 hydroxy group of 4-diphosphocytidyl-2C-methyl-D-erythritol. This is 4-diphosphocytidyl-2-C-methyl-D-erythritol kinase from Nitrosomonas eutropha (strain DSM 101675 / C91 / Nm57).